We begin with the raw amino-acid sequence, 304 residues long: Probable aspartoacylase (304 aa).

Zn(2+)-binding residues include His13 and Glu16. Substrate contacts are provided by residues Arg55 and 62–63 (NR). His105 is a binding site for Zn(2+). Substrate contacts are provided by Glu163 and Tyr273.

It belongs to the AspA/AstE family. Aspartoacylase subfamily. Zn(2+) is required as a cofactor.

The catalysed reaction is an N-acyl-L-aspartate + H2O = a carboxylate + L-aspartate. This Prochlorococcus marinus (strain MIT 9313) protein is Probable aspartoacylase.